We begin with the raw amino-acid sequence, 431 residues long: Tyrosine--tRNA ligase (431 aa).

An L-tyrosine-binding site is contributed by Tyr34. A 'HIGH' region motif is present at residues 39–48 (PTADSLHIGH). Residues Tyr171 and Gln175 each coordinate L-tyrosine. The short motif at 231-235 (KFGKT) is the 'KMSKS' region element. Lys234 is a binding site for ATP. Residues 353 to 422 (INVVEALVKT…GKYTILRRGK (70 aa)) enclose the S4 RNA-binding domain.

Belongs to the class-I aminoacyl-tRNA synthetase family. TyrS type 1 subfamily. In terms of assembly, homodimer.

Its subcellular location is the cytoplasm. The enzyme catalyses tRNA(Tyr) + L-tyrosine + ATP = L-tyrosyl-tRNA(Tyr) + AMP + diphosphate + H(+). In terms of biological role, catalyzes the attachment of tyrosine to tRNA(Tyr) in a two-step reaction: tyrosine is first activated by ATP to form Tyr-AMP and then transferred to the acceptor end of tRNA(Tyr). In Neisseria meningitidis serogroup C / serotype 2a (strain ATCC 700532 / DSM 15464 / FAM18), this protein is Tyrosine--tRNA ligase.